Reading from the N-terminus, the 103-residue chain is Histone H4.1 (103 aa).

Residues 1–14 (MSGRGKGGKGLGKG) are compositionally biased toward gly residues. The interval 1-20 (MSGRGKGGKGLGKGGAKRHR) is disordered. At lysine 6 the chain carries N6-acetyl-N6-methyllysine; alternate. Residues lysine 6, lysine 9, and lysine 13 each carry the N6-methyllysine; alternate modification. Lysine 13 bears the N6-acetyl-N6-methyllysine; alternate mark. A DNA-binding region spans residues 17-21 (KRHRK). The residue at position 92 (lysine 92) is an N6-glutaryllysine.

Belongs to the histone H4 family. The nucleosome is a histone octamer containing two molecules each of H2A, H2B, H3 and H4 assembled in one H3-H4 heterotetramer and two H2A-H2B heterodimers. The octamer wraps approximately 147 bp of DNA. Glutarylation at Lys-92 (H4K91glu) destabilizes nucleosomes by promoting dissociation of the H2A-H2B dimers from nucleosomes.

Its subcellular location is the nucleus. It localises to the chromosome. Core component of nucleosome. Nucleosomes wrap and compact DNA into chromatin, limiting DNA accessibility to the cellular machineries which require DNA as a template. Histones thereby play a central role in transcription regulation, DNA repair, DNA replication and chromosomal stability. DNA accessibility is regulated via a complex set of post-translational modifications of histones, also called histone code, and nucleosome remodeling. This is Histone H4.1 (HHF1) from Eremothecium gossypii (strain ATCC 10895 / CBS 109.51 / FGSC 9923 / NRRL Y-1056) (Yeast).